Here is a 198-residue protein sequence, read N- to C-terminus: Recombination protein RecR (198 aa).

A C4-type zinc finger spans residues 57–72 (CRQCRTLSEEELCPQC). Positions 80–174 (SLLCVVEGPL…TLSRIAHGVP (95 aa)) constitute a Toprim domain.

This sequence belongs to the RecR family.

Functionally, may play a role in DNA repair. It seems to be involved in an RecBC-independent recombinational process of DNA repair. It may act with RecF and RecO. The protein is Recombination protein RecR of Pseudomonas paraeruginosa (strain DSM 24068 / PA7) (Pseudomonas aeruginosa (strain PA7)).